Reading from the N-terminus, the 655-residue chain is Very long-chain specific acyl-CoA dehydrogenase, mitochondrial (655 aa).

Residues 1–40 (MQAARIAPSLGRQLLRFGGGSSRPTALLGQPWPGPARRPY) constitute a mitochondrion transit peptide. A catalytic region spans residues 41 to 482 (AGGAAQLALD…ALQGCMDKGK (442 aa)). Position 51 is an N6-acetyllysine (lysine 51). Lysine 71 carries the post-translational modification N6-acetyllysine; alternate. An N6-succinyllysine; alternate modification is found at lysine 71. An N6-succinyllysine modification is found at lysine 195. An FAD-binding site is contributed by 214–223 (FCLTEPSSGS). At cysteine 237 the chain carries S-nitrosocysteine. Lysine 239 is subject to N6-acetyllysine; alternate. N6-succinyllysine; alternate is present on lysine 239. 249–251 (WIS) provides a ligand contact to FAD. 2 positions are modified to N6-acetyllysine; alternate: lysine 276 and lysine 278. 2 positions are modified to N6-succinyllysine; alternate: lysine 276 and lysine 278. Lysine 298 carries the N6-acetyllysine modification. An N6-acetyllysine; alternate modification is found at lysine 331. Lysine 331 carries the post-translational modification N6-succinyllysine; alternate. The residue at position 372 (lysine 372) is an N6-succinyllysine. Position 461–463 (461–463 (FEG)) interacts with substrate. Glutamate 462 serves as the catalytic Proton acceptor. Position 464 to 466 (464 to 466 (TND)) interacts with FAD. Lysine 482 is modified (N6-acetyllysine; alternate). N6-succinyllysine; alternate is present on lysine 482. Positions 483–516 (ELSGLGSALKNPFGNAGLLLGEAGKQLRRRAGLG) are membrane-anchoring. Phosphoserine occurs at positions 517 and 522. At lysine 550 the chain carries N6-acetyllysine. Lysine 556 is modified (N6-acetyllysine; alternate). Lysine 556 is modified (N6-succinyllysine; alternate). Glutamine 562 lines the FAD pocket. Position 639 is an N6-succinyllysine (lysine 639).

The protein belongs to the acyl-CoA dehydrogenase family. As to quaternary structure, homodimer. Homodimerizes after import into the mitochondrion. The cofactor is FAD. Post-translationally, S-nitrosylation at Cys-237 in liver improves catalytic efficiency.

The protein resides in the mitochondrion inner membrane. It catalyses the reaction a very-long-chain 2,3-saturated fatty acyl-CoA + oxidized [electron-transfer flavoprotein] + H(+) = a very-long-chain (2E)-enoyl-CoA + reduced [electron-transfer flavoprotein]. The enzyme catalyses dodecanoyl-CoA + oxidized [electron-transfer flavoprotein] + H(+) = (2E)-dodecenoyl-CoA + reduced [electron-transfer flavoprotein]. The catalysed reaction is tetradecanoyl-CoA + oxidized [electron-transfer flavoprotein] + H(+) = (2E)-tetradecenoyl-CoA + reduced [electron-transfer flavoprotein]. It carries out the reaction oxidized [electron-transfer flavoprotein] + hexadecanoyl-CoA + H(+) = (2E)-hexadecenoyl-CoA + reduced [electron-transfer flavoprotein]. It catalyses the reaction octadecanoyl-CoA + oxidized [electron-transfer flavoprotein] + H(+) = (2E)-octadecenoyl-CoA + reduced [electron-transfer flavoprotein]. The enzyme catalyses eicosanoyl-CoA + oxidized [electron-transfer flavoprotein] + H(+) = (2E)-eicosenoyl-CoA + reduced [electron-transfer flavoprotein]. The catalysed reaction is docosanoyl-CoA + oxidized [electron-transfer flavoprotein] + H(+) = (2E)-docosenoyl-CoA + reduced [electron-transfer flavoprotein]. It carries out the reaction tetracosanoyl-CoA + oxidized [electron-transfer flavoprotein] + H(+) = (2E)-tetracosenoyl-CoA + reduced [electron-transfer flavoprotein]. It functions in the pathway lipid metabolism; mitochondrial fatty acid beta-oxidation. In terms of biological role, very long-chain specific acyl-CoA dehydrogenase is one of the acyl-CoA dehydrogenases that catalyze the first step of mitochondrial fatty acid beta-oxidation, an aerobic process breaking down fatty acids into acetyl-CoA and allowing the production of energy from fats. The first step of fatty acid beta-oxidation consists in the removal of one hydrogen from C-2 and C-3 of the straight-chain fatty acyl-CoA thioester, resulting in the formation of trans-2-enoyl-CoA. Among the different mitochondrial acyl-CoA dehydrogenases, very long-chain specific acyl-CoA dehydrogenase acts specifically on acyl-CoAs with saturated 12 to 24 carbons long primary chains. The polypeptide is Very long-chain specific acyl-CoA dehydrogenase, mitochondrial (Macaca fascicularis (Crab-eating macaque)).